A 468-amino-acid chain; its full sequence is V-type proton ATPase subunit S1 (468 aa).

An N-terminal signal peptide occupies residues 1 to 35 (MMAATAAAQVRAGTRWAPALCRMPWLPLMLVAAAA). The propeptide occupies 36 to 228 (ATSEQQVPLV…TAVRPSRVAR (193 aa)). Residues 36 to 417 (ATSEQQVPLV…KKFSYASDCA (382 aa)) lie on the Lumenal side of the membrane. 8 N-linked (GlcNAc...) asparagine glycosylation sites follow: Asn167, Asn258, Asn271, Asn294, Asn301, Asn348, Asn355, and Asn404. Cysteines 369 and 416 form a disulfide. Residues 418–438 (GFFSPGIWMGLLTSLFMLFIF) traverse the membrane as a helical segment. Over 439 to 468 (TYGLHMILSLKTMDRFDDHKGPTITLTQIV) the chain is Cytoplasmic.

Belongs to the vacuolar ATPase subunit S1 family. Accessory component of the multisubunit proton-transporting vacuolar (V)-ATPase protein pump. Interacts (via N-terminus) with ATP6AP2 (via N-terminus). Interacts with RNASEK. Interacts with TMEM106B (via C-terminus). In terms of processing, N-glycosylated.

It is found in the endoplasmic reticulum membrane. It localises to the endoplasmic reticulum-Golgi intermediate compartment membrane. The protein resides in the cytoplasmic vesicle. The protein localises to the secretory vesicle. Its subcellular location is the synaptic vesicle membrane. It is found in the clathrin-coated vesicle membrane. Accessory subunit of the proton-transporting vacuolar (V)-ATPase protein pump, which is required for luminal acidification of secretory vesicles. Guides the V-type ATPase into specialized subcellular compartments, such as neuroendocrine regulated secretory vesicles or the ruffled border of the osteoclast, thereby regulating its activity. Involved in membrane trafficking and Ca(2+)-dependent membrane fusion. May play a role in the assembly of the V-type ATPase complex. In aerobic conditions, involved in intracellular iron homeostasis, thus triggering the activity of Fe(2+) prolyl hydroxylase (PHD) enzymes, and leading to HIF1A hydroxylation and subsequent proteasomal degradation. In islets of Langerhans cells, may regulate the acidification of dense-core secretory granules. The sequence is that of V-type proton ATPase subunit S1 (ATP6AP1) from Bos taurus (Bovine).